The following is a 103-amino-acid chain: Small ribosomal subunit protein uS14c (103 aa).

Belongs to the universal ribosomal protein uS14 family. Part of the 30S ribosomal subunit.

It is found in the plastid. The protein resides in the chloroplast. Binds 16S rRNA, required for the assembly of 30S particles. The sequence is that of Small ribosomal subunit protein uS14c from Lolium perenne (Perennial ryegrass).